The sequence spans 269 residues: Formamidopyrimidine-DNA glycosylase (269 aa).

Pro2 (schiff-base intermediate with DNA) is an active-site residue. Glu3 acts as the Proton donor in catalysis. The active-site Proton donor; for beta-elimination activity is the Lys57. 3 residues coordinate DNA: His90, Arg109, and Lys150. The FPG-type zinc-finger motif lies at 235 to 269 (QVYGRKGEPCRVCGTPIVASKHAQRATFYCRQCQK). The Proton donor; for delta-elimination activity role is filled by Arg259.

Belongs to the FPG family. As to quaternary structure, monomer. The cofactor is Zn(2+).

The enzyme catalyses Hydrolysis of DNA containing ring-opened 7-methylguanine residues, releasing 2,6-diamino-4-hydroxy-5-(N-methyl)formamidopyrimidine.. It catalyses the reaction 2'-deoxyribonucleotide-(2'-deoxyribose 5'-phosphate)-2'-deoxyribonucleotide-DNA = a 3'-end 2'-deoxyribonucleotide-(2,3-dehydro-2,3-deoxyribose 5'-phosphate)-DNA + a 5'-end 5'-phospho-2'-deoxyribonucleoside-DNA + H(+). Functionally, involved in base excision repair of DNA damaged by oxidation or by mutagenic agents. Acts as a DNA glycosylase that recognizes and removes damaged bases. Has a preference for oxidized purines, such as 7,8-dihydro-8-oxoguanine (8-oxoG). Has AP (apurinic/apyrimidinic) lyase activity and introduces nicks in the DNA strand. Cleaves the DNA backbone by beta-delta elimination to generate a single-strand break at the site of the removed base with both 3'- and 5'-phosphates. This chain is Formamidopyrimidine-DNA glycosylase, found in Enterobacter sp. (strain 638).